The following is a 161-amino-acid chain: Small ribosomal subunit protein uS9 (161 aa).

The protein belongs to the universal ribosomal protein uS9 family.

This Rickettsia prowazekii (strain Madrid E) protein is Small ribosomal subunit protein uS9 (rpsI).